The chain runs to 460 residues: tRNA modification GTPase MnmE (460 aa).

Residues Arg-29, Glu-89, and Arg-128 each contribute to the (6S)-5-formyl-5,6,7,8-tetrahydrofolate site. Residues 224 to 382 enclose the TrmE-type G domain; the sequence is GVPTVIIGKP…LKQNLLEIIQ (159 aa). Asn-234 contributes to the K(+) binding site. Residues 234–239, 253–259, and 278–281 contribute to the GTP site; these read NAGKST, SEIAGTT, and DTAG. Ser-238 is a Mg(2+) binding site. K(+) contacts are provided by Ser-253, Ile-255, and Thr-258. Thr-259 lines the Mg(2+) pocket. A (6S)-5-formyl-5,6,7,8-tetrahydrofolate-binding site is contributed by Lys-460.

It belongs to the TRAFAC class TrmE-Era-EngA-EngB-Septin-like GTPase superfamily. TrmE GTPase family. Homodimer. Heterotetramer of two MnmE and two MnmG subunits. It depends on K(+) as a cofactor.

It localises to the cytoplasm. In terms of biological role, exhibits a very high intrinsic GTPase hydrolysis rate. Involved in the addition of a carboxymethylaminomethyl (cmnm) group at the wobble position (U34) of certain tRNAs, forming tRNA-cmnm(5)s(2)U34. In Cytophaga hutchinsonii (strain ATCC 33406 / DSM 1761 / CIP 103989 / NBRC 15051 / NCIMB 9469 / D465), this protein is tRNA modification GTPase MnmE.